The chain runs to 276 residues: Small ribosomal subunit protein uS2 (276 aa).

Serine 2 is subject to N-acetylserine.

This sequence belongs to the universal ribosomal protein uS2 family. In terms of assembly, component of the small ribosomal subunit. Mature ribosomes consist of a small (40S) and a large (60S) subunit. The 40S subunit contains about 33 different proteins and 1 molecule of RNA (18S). The 60S subunit contains about 49 different proteins and 3 molecules of RNA (28S, 5.8S and 5S). Interacts with rps-21.

Its subcellular location is the cytoplasm. Its function is as follows. Required for the assembly and/or stability of the 40S ribosomal subunit. Required for the processing of the 20S rRNA-precursor to mature 18S rRNA in a late step of the maturation of 40S ribosomal subunits. Involved in cold-warm shock-induced translocation of the RNA exosome components from the nucleolus to nucleoplasm. The protein is Small ribosomal subunit protein uS2 of Caenorhabditis elegans.